Consider the following 515-residue polypeptide: SWI/SNF global transcription activator complex subunit snf59 (515 aa).

A disordered region spans residues 1–226 (MEEEDITLEH…IHHVDSKNEE (226 aa)). 5 stretches are compositionally biased toward basic and acidic residues: residues 7–37 (TLEHSDDLNKEESGESNRVNIEEPEHHDNSN), 50–59 (EEPKYHDNSN), 73–85 (EPEHHDNSKKEST), 94–103 (EEPKHHDNSN), and 116–125 (EEPKHHDSSN). The segment covering 126 to 136 (KESTNLDNSNM) has biased composition (polar residues). The segment covering 140-226 (ENQKNFKIEE…IHHVDSKNEE (87 aa)) has biased composition (basic and acidic residues).

It belongs to the RSC7/SWP82 family. SWP82 subfamily. Component of the SWI/SNF global transcription activator complex composed of at least arp9, arp42, snf5, snf22, snf30, snf59, sol1, ssr1, ssr2, ssr3, ssr4 and tfg3.

It is found in the nucleus. Component of the SWI/SNF complex, an ATP-dependent chromatin remodeling complex, which is required for the positive and negative regulation of gene expression of a large number of genes. It changes chromatin structure by altering DNA-histone contacts within a nucleosome, leading eventually to a change in nucleosome position, thus facilitating or repressing binding of gene-specific transcription factors. The protein is SWI/SNF global transcription activator complex subunit snf59 (snf59) of Schizosaccharomyces pombe (strain 972 / ATCC 24843) (Fission yeast).